A 100-amino-acid chain; its full sequence is Omega toxin Ap2 (100 aa).

Positions 1 to 22 (MNTTQVILFAVVLVLTVTVGQA) are cleaved as a signal peptide. Residues 23 to 57 (DEDSAETSLLRKLEEAEASMFGQYLEESKNSPEQR) constitute a propeptide that is removed on maturation. Cystine bridges form between Cys58/Cys74, Cys65/Cys79, and Cys73/Cys94. Ser99 carries the serine amide modification.

The protein belongs to the neurotoxin 14 (magi-1) family. 08 (Ltx-4) subfamily. In terms of tissue distribution, expressed by the venom duct.

The protein localises to the secreted. Its function is as follows. Inhibits 31.17% of Cav2.1/CACNA1A current at 1 uM concentration. The sequence is that of Omega toxin Ap2 from Acanthoscurria paulensis (Brazilian giant black tarantula spider).